The chain runs to 681 residues: U3 small nucleolar ribonucleoprotein protein MPP10 (681 aa).

Ser-61, Ser-120, and Ser-140 each carry phosphoserine. Positions 109–139 (ECEDEECEEDASEVEADNQENLETDLDEEQL) form a coiled coil. Residues 111–144 (EDEECEEDASEVEADNQENLETDLDEEQLSDEGG) show a composition bias toward acidic residues. Disordered stretches follow at residues 111-202 (EDEE…SVVD), 215-256 (LEKV…GRQK), and 268-365 (YKDF…EKRQ). Basic and acidic residues predominate over residues 145–163 (DVPKGRDRAKSSRKSDPRK). Phosphoserine is present on residues Ser-164, Ser-168, and Ser-172. Basic and acidic residues predominate over residues 215-227 (LEKVEKEEEKRPD). Acidic residues-rich tracts occupy residues 228–248 (GEEEDEEDIDLFEDIDSDESE) and 273–322 (DPVE…EDEN). Ser-244, Ser-247, Ser-277, and Ser-346 each carry phosphoserine. Residues 349–383 (AVKQESDEVKSSFEKRQEKMNEKIASLEKELLDKK) adopt a coiled-coil conformation. Residue Lys-351 forms a Glycyl lysine isopeptide (Lys-Gly) (interchain with G-Cter in SUMO2) linkage. Basic and acidic residues predominate over residues 352–365 (QESDEVKSSFEKRQ). Residues Lys-383 and Lys-395 each participate in a glycyl lysine isopeptide (Lys-Gly) (interchain with G-Cter in SUMO2) cross-link. Positions 471–491 (AEIYEQEYLKLNQQKTEEEDN) form a coiled coil. Residue Lys-556 forms a Glycyl lysine isopeptide (Lys-Gly) (interchain with G-Cter in SUMO2) linkage. Residues 560–576 (KAGDLKTAAEKTATDKK) are compositionally biased toward basic and acidic residues. Positions 560–644 (KAGDLKTAAE…RKDKPLKSSQ (85 aa)) are disordered. A coiled-coil region spans residues 575–604 (KKRERRKKKYQKRLKIKEKEKRKKLLEKNN). Positions 577–599 (RERRKKKYQKRLKIKEKEKRKKL) are enriched in basic residues. Position 609 is an N6-acetyllysine (Lys-609). The segment covering 630–640 (LLKDERKDKPL) has biased composition (basic and acidic residues). Glycyl lysine isopeptide (Lys-Gly) (interchain with G-Cter in SUMO2) cross-links involve residues Lys-632 and Lys-649. The tract at residues 657–681 (QINDAKQPEKIKKKKQDISVHKLKL) is disordered. Over residues 662–681 (KQPEKIKKKKQDISVHKLKL) the composition is skewed to basic and acidic residues.

Belongs to the MPP10 family. As to quaternary structure, part of the small subunit (SSU) processome, composed of more than 70 proteins and the RNA chaperone small nucleolar RNA (snoRNA) U3. Component of a heterotrimeric complex containing IMP3, IMP4 and MPHOSPH10. Interacts with IMP3 and IMP4. In terms of processing, phosphorylated in M (mitotic) phase.

It is found in the nucleus. The protein resides in the nucleolus. Its subcellular location is the chromosome. Its function is as follows. Component of the 60-80S U3 small nucleolar ribonucleoprotein (U3 snoRNP). Required for the early cleavages during pre-18S ribosomal RNA processing. Part of the small subunit (SSU) processome, first precursor of the small eukaryotic ribosomal subunit. During the assembly of the SSU processome in the nucleolus, many ribosome biogenesis factors, an RNA chaperone and ribosomal proteins associate with the nascent pre-rRNA and work in concert to generate RNA folding, modifications, rearrangements and cleavage as well as targeted degradation of pre-ribosomal RNA by the RNA exosome. This chain is U3 small nucleolar ribonucleoprotein protein MPP10 (Mphosph10), found in Mus musculus (Mouse).